The primary structure comprises 62 residues: Photosystem II reaction center protein Z (62 aa).

Transmembrane regions (helical) follow at residues 8 to 28 (ALVA…VAYA) and 41 to 61 (WLGS…NFFV).

It belongs to the PsbZ family. As to quaternary structure, PSII is composed of 1 copy each of membrane proteins PsbA, PsbB, PsbC, PsbD, PsbE, PsbF, PsbH, PsbI, PsbJ, PsbK, PsbL, PsbM, PsbT, PsbX, PsbY, PsbZ, Psb30/Ycf12, peripheral proteins PsbO, CyanoQ (PsbQ), PsbU, PsbV and a large number of cofactors. It forms dimeric complexes.

The protein localises to the cellular thylakoid membrane. May control the interaction of photosystem II (PSII) cores with the light-harvesting antenna, regulates electron flow through the 2 photosystem reaction centers. PSII is a light-driven water plastoquinone oxidoreductase, using light energy to abstract electrons from H(2)O, generating a proton gradient subsequently used for ATP formation. The chain is Photosystem II reaction center protein Z from Nostoc sp. (strain PCC 7120 / SAG 25.82 / UTEX 2576).